The sequence spans 293 residues: Elongation factor Ts (293 aa).

Residues 80–83 (TDFV) form an involved in Mg(2+) ion dislocation from EF-Tu region.

The protein belongs to the EF-Ts family.

It is found in the cytoplasm. In terms of biological role, associates with the EF-Tu.GDP complex and induces the exchange of GDP to GTP. It remains bound to the aminoacyl-tRNA.EF-Tu.GTP complex up to the GTP hydrolysis stage on the ribosome. This Aeromonas salmonicida (strain A449) protein is Elongation factor Ts.